Reading from the N-terminus, the 1552-residue chain is ABC multidrug transporter lscH (1552 aa).

2 consecutive transmembrane segments (helical) span residues 32-52 (ETILSILPSVLVIVVAPIPII) and 68-88 (WFKKISSICFITLSAALVGLW). The N-linked (GlcNAc...) asparagine glycan is linked to Asn-91. Transmembrane regions (helical) follow at residues 100–120 (STPSAVLTFVLSLVYVLLSTI), 158–178 (HSAIPPVFASSLALRVVMLLL), 280–300 (LFQIGFTYAQPFLITAAIELA), 311–331 (NGYGLIGAYILVYSGIAVSVG), 413–433 (AACVMSVGFAIVVMVGTVFLA), 457–477 (ALASIKWLKISGLTDVAFSVI), 500–520 (ILSICTPILGPLLTFAVFAGI), and 528–548 (LTIAKVFTAFSIIVLLNSPLA). The ABC transmembrane type-1 1 domain occupies 280-559 (LFQIGFTYAQ…IVQALPQISG (280 aa)). A disordered region spans residues 573–655 (AEERHDPRST…PDANGDSRDA (83 aa)). Polar residues predominate over residues 581–602 (STTTGTSPESNNGSQQTLSDKQ). Asn-592 carries an N-linked (GlcNAc...) asparagine glycan. The 246-residue stretch at 639-884 (GHLADTTPDA…AELGWADRDL (246 aa)) folds into the ABC transporter 1 domain. 676–683 (GPVGCGKS) is a binding site for ATP. Residues Asn-719 and Asn-834 are each glycosylated (N-linked (GlcNAc...) asparagine). Over residues 887-912 (QQEKPGKDELNHEHGEYSESAPEKLR) the composition is skewed to basic and acidic residues. Positions 887 to 917 (QQEKPGKDELNHEHGEYSESAPEKLRRSQTN) are disordered. Transmembrane regions (helical) follow at residues 957 to 977 (GWLTITIFVIAICVYAFCDSF) and 1005 to 1025 (AVLGVGAVAACLIGTWQLFII). The region spanning 963–1241 (IFVIAICVYA…ATITSWVTLE (279 aa)) is the ABC transmembrane type-1 2 domain. N-linked (GlcNAc...) asparagine glycosylation is present at Asn-1028. The next 4 membrane-spanning stretches (helical) occupy residues 1076-1096 (AALGVVMALSFGIAQFILVCV), 1100-1120 (YMAALLPFLLAVLYAIQHFYL), 1184-1204 (WITFAVNMVIMMLAVILIVLT), and 1210-1230 (AIGPGYVGIALSNILAFSATM). One can recognise an ABC transporter 2 domain in the interval 1295–1538 (IELDNVTASY…PTSIFKELYL (244 aa)). N-linked (GlcNAc...) asparagine glycans are attached at residues Asn-1299 and Asn-1313. 1328-1335 (GRTGSGKS) contacts ATP.

It belongs to the ABC transporter superfamily. ABCC family. Conjugate transporter (TC 3.A.1.208) subfamily.

It localises to the cell membrane. Its function is as follows. ABC multidrug transporter; part of the gene cluster that mediates the biosynthesis of the lipopeptide antibiotics leucinostatins that show extensive biological activities, including antimalarial, antiviral, antibacterial, antifungal, and antitumor activities, as well as phytotoxic. May be involved in the efflux of leucinostatins. The chain is ABC multidrug transporter lscH from Purpureocillium lilacinum (Paecilomyces lilacinus).